The primary structure comprises 618 residues: Membrane protein insertase YidC (618 aa).

A run of 6 helical transmembrane segments spans residues 3 to 23 (KNTI…SFLS), 363 to 383 (WGLS…IVVF), 439 to 459 (LPML…PSAI), 478 to 498 (FITF…FCLL), 520 to 540 (PQMA…LFVL), and 545 to 565 (SGLN…MIIL).

The protein belongs to the OXA1/ALB3/YidC family. Type 1 subfamily. In terms of assembly, interacts with the Sec translocase complex via SecD. Specifically interacts with transmembrane segments of nascent integral membrane proteins during membrane integration.

Its subcellular location is the cell inner membrane. Its function is as follows. Required for the insertion and/or proper folding and/or complex formation of integral membrane proteins into the membrane. Involved in integration of membrane proteins that insert both dependently and independently of the Sec translocase complex, as well as at least some lipoproteins. Aids folding of multispanning membrane proteins. The protein is Membrane protein insertase YidC of Bacteroides fragilis (strain ATCC 25285 / DSM 2151 / CCUG 4856 / JCM 11019 / LMG 10263 / NCTC 9343 / Onslow / VPI 2553 / EN-2).